The sequence spans 312 residues: Ankyrin repeat family A protein 2 (312 aa).

ANK repeat units lie at residues 147-179, 180-212, 213-245, 246-278, and 279-312; these read ANSLSAHQLAAQGEMLYLATRIEQENVINHTDE, EGFTPLMWAAAHGQIAVVEFLLQNGADPQLLGK, GRESALSLACSKGYTDIVKMLLDCGVDVNEYDW, NGGTPLLYAVHGNHVKCVKMLLENGADPTIETD, and SGYNSMDLAVALGYRGVQQAIESHLLKLLQNIRE.

In terms of assembly, interacts (via ANK repeats) with CCDC8 (via PxLPxI/L motif); mediates the interaction with the 3M complex which is composed of CCDC8, CUL7 and OBSL1. Interacts (via ANK repeats) with HDAC4 (via PxLPxI/L motif). Interacts (via ANK repeats) with HDAC5 (via PxLPxI/L motif). Interacts (via ANK repeats) with LRP2/megalin (via PxLPxI/L motif). Interacts (via ANK repeats) with RFX7 (via PxLPxI/L motif). Interacts with AHRR. Interacts with NEK6.

It localises to the cytoplasm. It is found in the cytoskeleton. Its subcellular location is the membrane. Functionally, may regulate the interaction between the 3M complex and the histone deacetylases HDAC4 and HDAC5. May also regulate LRP2/megalin. The protein is Ankyrin repeat family A protein 2 (Ankra2) of Mus musculus (Mouse).